Consider the following 426-residue polypeptide: Serine--tRNA ligase (426 aa).

Position 233-235 (233-235 (TAE)) interacts with L-serine. An ATP-binding site is contributed by 264 to 266 (RSE). Glutamate 287 serves as a coordination point for L-serine. ATP is bound at residue 351-354 (EISS). Serine 387 serves as a coordination point for L-serine.

Belongs to the class-II aminoacyl-tRNA synthetase family. Type-1 seryl-tRNA synthetase subfamily. Homodimer. The tRNA molecule binds across the dimer.

It localises to the cytoplasm. The catalysed reaction is tRNA(Ser) + L-serine + ATP = L-seryl-tRNA(Ser) + AMP + diphosphate + H(+). The enzyme catalyses tRNA(Sec) + L-serine + ATP = L-seryl-tRNA(Sec) + AMP + diphosphate + H(+). Its pathway is aminoacyl-tRNA biosynthesis; selenocysteinyl-tRNA(Sec) biosynthesis; L-seryl-tRNA(Sec) from L-serine and tRNA(Sec): step 1/1. Catalyzes the attachment of serine to tRNA(Ser). Is also able to aminoacylate tRNA(Sec) with serine, to form the misacylated tRNA L-seryl-tRNA(Sec), which will be further converted into selenocysteinyl-tRNA(Sec). The chain is Serine--tRNA ligase from Clostridium botulinum (strain Okra / Type B1).